We begin with the raw amino-acid sequence, 608 residues long: MSHFPKLLSSQIAFDVARTMLDGFDKHYRLFREVSRQAKVKFEAGDWHSLQQMQRDRIAFYNERVRETSVILEDEYDAENIEDEIWQQIKLHYIGLLTNHHQPELAETFFNSVCTRLLHRSYFNNDFIFVRPAISTEYIENEESPTRPTFRAYYPGSRQGMAECFERIVHNFQLETPFEDLRRDVGHVVRGVEEHFGDFRIAPNFQIHVLSSLFFRNKTAFIIGRIVNADRTYPLAIPIVHGPSGKLTLDAVLLKKVQVLILFSFTHSYFMVDMEIPSAYVTFLRDIMPRKPRAEIYTSLGLQKQGKNLFYRDFLHHLQHSSDKFISAPGIKGLVMLVFTLPSYPYVFKVIKDFYPAPKETTRELIKSKYQLVKQHDRVGRMADTLEYSNVAFPLSRFDEDLVRELEHHAPSMIEYQRGKDGGEEIVVRHVYIERRMTPLNIWLQEGTDEQLEHGIIEYGNAIKELIAANIFPGDMLYKNFGVTRHGRVVFYDYDEIEYFTDCNVRRVPQPRNEEEEMSGDIWYTVRPHDIFPETFRTFLLGNPRVREAFLRHHEDLFDPAMWQSHKDRLLAGHVHDFFAYPISERFINRYGTAAHGTPVASFARRVA.

ATP contacts are provided by residues 328–334 (APGIKGL) and K349. D384 is a catalytic residue.

Belongs to the AceK family.

It localises to the cytoplasm. It carries out the reaction L-seryl-[isocitrate dehydrogenase] + ATP = O-phospho-L-seryl-[isocitrate dehydrogenase] + ADP + H(+). Bifunctional enzyme which can phosphorylate or dephosphorylate isocitrate dehydrogenase (IDH) on a specific serine residue. This is a regulatory mechanism which enables bacteria to bypass the Krebs cycle via the glyoxylate shunt in response to the source of carbon. When bacteria are grown on glucose, IDH is fully active and unphosphorylated, but when grown on acetate or ethanol, the activity of IDH declines drastically concomitant with its phosphorylation. The polypeptide is Isocitrate dehydrogenase kinase/phosphatase (Cupriavidus pinatubonensis (strain JMP 134 / LMG 1197) (Cupriavidus necator (strain JMP 134))).